Reading from the N-terminus, the 485-residue chain is Cobyric acid synthase (485 aa).

The region spanning 250–448 is the GATase cobBQ-type domain; it reads TQTVAVIAYP…LHGMFEDPRV (199 aa). The active-site Nucleophile is the C334. Residue H440 is part of the active site.

Belongs to the CobB/CobQ family. CobQ subfamily.

It participates in cofactor biosynthesis; adenosylcobalamin biosynthesis. Functionally, catalyzes amidations at positions B, D, E, and G on adenosylcobyrinic A,C-diamide. NH(2) groups are provided by glutamine, and one molecule of ATP is hydrogenolyzed for each amidation. The chain is Cobyric acid synthase from Polaromonas naphthalenivorans (strain CJ2).